A 217-amino-acid chain; its full sequence is Probable transaldolase (217 aa).

Catalysis depends on lysine 83, which acts as the Schiff-base intermediate with substrate.

Belongs to the transaldolase family. Type 3B subfamily.

Its subcellular location is the cytoplasm. It carries out the reaction D-sedoheptulose 7-phosphate + D-glyceraldehyde 3-phosphate = D-erythrose 4-phosphate + beta-D-fructose 6-phosphate. The protein operates within carbohydrate degradation; pentose phosphate pathway; D-glyceraldehyde 3-phosphate and beta-D-fructose 6-phosphate from D-ribose 5-phosphate and D-xylulose 5-phosphate (non-oxidative stage): step 2/3. Transaldolase is important for the balance of metabolites in the pentose-phosphate pathway. This Brucella abortus (strain S19) protein is Probable transaldolase.